A 92-amino-acid chain; its full sequence is Small ribosomal subunit protein uS19 (92 aa).

The protein belongs to the universal ribosomal protein uS19 family.

Protein S19 forms a complex with S13 that binds strongly to the 16S ribosomal RNA. This chain is Small ribosomal subunit protein uS19, found in Rhodospirillum centenum (strain ATCC 51521 / SW).